Consider the following 158-residue polypeptide: Superoxide dismutase [Cu-Zn] (158 aa).

Positions 46, 48, and 63 each coordinate Cu cation. A disulfide bridge connects residues C57 and C149. H63, H71, H80, and D83 together coordinate Zn(2+). A Cu cation-binding site is contributed by H120.

It belongs to the Cu-Zn superoxide dismutase family. As to quaternary structure, homodimer. Requires Cu cation as cofactor. Zn(2+) is required as a cofactor.

Its subcellular location is the cytoplasm. It carries out the reaction 2 superoxide + 2 H(+) = H2O2 + O2. Its function is as follows. Destroys radicals which are normally produced within the cells and which are toxic to biological systems. This Brugia pahangi (Filarial nematode worm) protein is Superoxide dismutase [Cu-Zn] (SODC).